Reading from the N-terminus, the 128-residue chain is Cytochrome c' (128 aa).

Glutamine 13, glutamine 17, glutamate 69, threonine 70, cysteine 118, cysteine 121, and histidine 122 together coordinate heme c.

Homodimer. In terms of processing, binds 1 heme c group covalently per subunit.

Functionally, cytochrome c' is the most widely occurring bacterial c-type cytochrome. Cytochromes c' are high-spin proteins and the heme has no sixth ligand. Their exact function is not known. The sequence is that of Cytochrome c' from Magnetospirillum molischianum (Rhodospirillum molischianum).